The chain runs to 116 residues: Protein Rev (116 aa).

Phosphoserine; by host CK2 occurs at positions 5 and 8. Residues 18–26 (LIKILYQSN) form a homomultimerization region. The interval 26-50 (NPYPKPNGSRQARRNRRRRWRARQN) is disordered. The Nuclear localization signal and RNA-binding (RRE) motif lies at 34–50 (SRQARRNRRRRWRARQN). The segment covering 36 to 47 (QARRNRRRRWRA) has biased composition (basic residues). The Nuclear export signal and binding to XPO1 signature appears at 73-84 (LQLPPIERLRLD). The disordered stretch occupies residues 91-116 (NSGTQGVGDPQISGEPCMVLGAGTKE). S92 carries the phosphoserine; by host modification.

It belongs to the HIV-1 REV protein family. In terms of assembly, homomultimer; when bound to the RRE. Multimeric assembly is essential for activity and may involve XPO1. Binds to human KPNB1, XPO1, TNPO1, RANBP5 and IPO7. Interacts with the viral Integrase. Interacts with human KHDRBS1. Interacts with human NAP1; this interaction decreases Rev multimerization and stimulates its activity. Interacts with human DEAD-box helicases DDX3 and DDX24; these interactions may serve for viral RNA export to the cytoplasm and packaging, respectively. Interacts with human PSIP1; this interaction may inhibit HIV-1 DNA integration by promoting dissociation of the Integrase-LEDGF/p75 complex. Post-translationally, asymmetrically arginine dimethylated at one site by host PRMT6. Methylation impairs the RNA-binding activity and export of viral RNA from the nucleus to the cytoplasm. In terms of processing, phosphorylated by protein kinase CK2. Presence of, and maybe binding to the N-terminus of the regulatory beta subunit of CK2 is necessary for CK2-mediated Rev's phosphorylation.

It is found in the host nucleus. The protein localises to the host nucleolus. Its subcellular location is the host cytoplasm. Its function is as follows. Escorts unspliced or incompletely spliced viral pre-mRNAs (late transcripts) out of the nucleus of infected cells. These pre-mRNAs carry a recognition sequence called Rev responsive element (RRE) located in the env gene, that is not present in fully spliced viral mRNAs (early transcripts). This function is essential since most viral proteins are translated from unspliced or partially spliced pre-mRNAs which cannot exit the nucleus by the pathway used by fully processed cellular mRNAs. Rev itself is translated from a fully spliced mRNA that readily exits the nucleus. Rev's nuclear localization signal (NLS) binds directly to KPNB1/Importin beta-1 without previous binding to KPNA1/Importin alpha-1. KPNB1 binds to the GDP bound form of RAN (Ran-GDP) and targets Rev to the nucleus. In the nucleus, the conversion from Ran-GDP to Ran-GTP dissociates Rev from KPNB1 and allows Rev's binding to the RRE in viral pre-mRNAs. Rev multimerization on the RRE via cooperative assembly exposes its nuclear export signal (NES) to the surface. Rev can then form a complex with XPO1/CRM1 and Ran-GTP, leading to nuclear export of the complex. Conversion from Ran-GTP to Ran-GDP mediates dissociation of the Rev/RRE/XPO1/RAN complex, so that Rev can return to the nucleus for a subsequent round of export. Beside KPNB1, also seems to interact with TNPO1/Transportin-1, RANBP5/IPO5 and IPO7/RANBP7 for nuclear import. The nucleoporin-like HRB/RIP is an essential cofactor that probably indirectly interacts with Rev to release HIV RNAs from the perinuclear region to the cytoplasm. This is Protein Rev from Homo sapiens (Human).